We begin with the raw amino-acid sequence, 303 residues long: RELT-like protein 2 (303 aa).

The helical transmembrane segment at 15–35 threads the bilayer; that stretch reads LYMLFLLVLVFFLMGLVGFMI. Disordered stretches follow at residues 47-68, 135-214, and 249-303; these read RTSR…DDVN, CSRS…QPRT, and PCTL…AGGM. Phosphoserine is present on Ser52. Composition is skewed to basic and acidic residues over residues 148 to 158 and 172 to 188; these read RSKEGKSRPRP and THIE…DGSP. A compositionally biased stretch (gly residues) spans 194 to 212; the sequence is GSGGGQEPGGSQAAGGGQP. Residues 274–295 are compositionally biased toward polar residues; sequence GLSSQEANGQPTKLDTSGQQES.

Belongs to the RELT family. As to quaternary structure, interacts with RELT, RELL1, OXSR1, PLSCR1 and TRAF2.

It is found in the cell membrane. In terms of biological role, induces activation of MAPK14/p38 cascade, when overexpressed. Induces apoptosis, when overexpressed. In Mus musculus (Mouse), this protein is RELT-like protein 2 (Rell2).